Reading from the N-terminus, the 65-residue chain is Large ribosomal subunit protein bL33m (65 aa).

The transit peptide at 1 to 8 (MFLSAVTF) directs the protein to the mitochondrion.

This sequence belongs to the bacterial ribosomal protein bL33 family. In terms of assembly, component of the mitochondrial ribosome large subunit (39S) which comprises a 16S rRNA and about 50 distinct proteins.

It is found in the mitochondrion. The polypeptide is Large ribosomal subunit protein bL33m (MRPL33) (Bos taurus (Bovine)).